A 351-amino-acid polypeptide reads, in one-letter code: Photosystem II D2 protein (351 aa).

The chain crosses the membrane as a helical span at residues 39–59 (TAYLAIGGWLTGTTFVTSWYT). His-116 lines the chlorophyll a pocket. Residues 123–139 (GFMLRQFELARLIGIRP) traverse the membrane as a helical segment. Positions 128 and 141 each coordinate pheophytin a. Residues 151–164 (VFVSVFLLYPLGQS) form a helical membrane-spanning segment. His-196 provides a ligand contact to chlorophyll a. The chain crosses the membrane as a helical span at residues 206–226 (GALLSAIHGVTVENTLYEDGE). Residues His-213 and Phe-260 each contribute to the a plastoquinone site. Position 213 (His-213) interacts with Fe cation. His-267 provides a ligand contact to Fe cation. The chain crosses the membrane as a helical span at residues 277-293 (GLWTSSIGIIGLALNLR).

Belongs to the reaction center PufL/M/PsbA/D family. As to quaternary structure, PSII is composed of 1 copy each of membrane proteins PsbA, PsbB, PsbC, PsbD, PsbE, PsbF, PsbH, PsbI, PsbJ, PsbK, PsbL, PsbM, PsbT, PsbX, PsbY, PsbZ, Psb30/Ycf12, peripheral proteins PsbO, CyanoQ (PsbQ), PsbU, PsbV and a large number of cofactors. It forms dimeric complexes. Requires The D1/D2 heterodimer binds P680, chlorophylls that are the primary electron donor of PSII, and subsequent electron acceptors. It shares a non-heme iron and each subunit binds pheophytin, quinone, additional chlorophylls, carotenoids and lipids. There is also a Cl(-1) ion associated with D1 and D2, which is required for oxygen evolution. The PSII complex binds additional chlorophylls, carotenoids and specific lipids. as cofactor.

The protein localises to the host cellular thylakoid membrane. The enzyme catalyses 2 a plastoquinone + 4 hnu + 2 H2O = 2 a plastoquinol + O2. Functionally, photosystem II (PSII) is a light-driven water:plastoquinone oxidoreductase that uses light energy to abstract electrons from H(2)O, generating O(2) and a proton gradient subsequently used for ATP formation. It consists of a core antenna complex that captures photons, and an electron transfer chain that converts photonic excitation into a charge separation. The D1/D2 (PsbA/PsbD) reaction center heterodimer binds P680, the primary electron donor of PSII as well as several subsequent electron acceptors. D2 is needed for assembly of a stable PSII complex. The sequence is that of Photosystem II D2 protein (psbD) from Synechococcus.